A 156-amino-acid chain; its full sequence is Large ribosomal subunit protein uL23 (156 aa).

The span at 1–19 shows a compositional bias: basic and acidic residues; sequence MAPKAKKEAPAPPKVEAKA. The segment at 1–67 is disordered; it reads MAPKAKKEAP…PKYPRKSAPR (67 aa). Ala-2 bears the N,N,N-trimethylalanine mark. Lys-14 participates in a covalent cross-link: Glycyl lysine isopeptide (Lys-Gly) (interchain with G-Cter in SUMO2). A compositionally biased stretch (basic residues) spans 20–67; it reads KALKAKKAVLKGVHSHKKKKIRTSPTFRRPKTLRLRRQPKYPRKSAPR. The segment at 32–74 is beta-like import receptor binding (BIB) domain; that stretch reads VHSHKKKKIRTSPTFRRPKTLRLRRQPKYPRKSAPRRNKLDHY. Residue Arg-41 is modified to Citrulline. Residue Ser-43 is modified to Phosphoserine. Residue Thr-45 is modified to Phosphothreonine. N6-acetyllysine is present on Lys-70.

It belongs to the universal ribosomal protein uL23 family. As to quaternary structure, component of the large ribosomal subunit. Interacts with LYAR and GNL2. Interacts with MDM2; this interaction may promote MDM2-mediated p53/TP53 polyubiquitination. Directly interacts (via BIB domain) with IPO5, IPO7, KPNB1 and TNPO1; these interactions are involved in RPL23A nuclear import for the assembly of ribosomal subunits. Interacts with IPO8. N-terminus is methylated by METTL11A/NTM1. In terms of processing, citrullinated by PADI4.

The protein resides in the cytoplasm. The protein localises to the nucleus. Its function is as follows. Component of the large ribosomal subunit. The ribosome is a large ribonucleoprotein complex responsible for the synthesis of proteins in the cell. Binds a specific region on the 26S rRNA. May promote p53/TP53 degradation possibly through the stimulation of MDM2-mediated TP53 polyubiquitination. The polypeptide is Large ribosomal subunit protein uL23 (RPL23A) (Oryctolagus cuniculus (Rabbit)).